Reading from the N-terminus, the 104-residue chain is Large ribosomal subunit protein bL21 (104 aa).

The protein belongs to the bacterial ribosomal protein bL21 family. As to quaternary structure, part of the 50S ribosomal subunit. Contacts protein L20.

This protein binds to 23S rRNA in the presence of protein L20. The polypeptide is Large ribosomal subunit protein bL21 (Alkalilimnicola ehrlichii (strain ATCC BAA-1101 / DSM 17681 / MLHE-1)).